A 159-amino-acid chain; its full sequence is Ribosomal RNA large subunit methyltransferase H (159 aa).

S-adenosyl-L-methionine-binding positions include Leu-76, Gly-108, and 127–132; that span reads FSKMTL.

This sequence belongs to the RNA methyltransferase RlmH family. As to quaternary structure, homodimer.

The protein resides in the cytoplasm. It carries out the reaction pseudouridine(1915) in 23S rRNA + S-adenosyl-L-methionine = N(3)-methylpseudouridine(1915) in 23S rRNA + S-adenosyl-L-homocysteine + H(+). In terms of biological role, specifically methylates the pseudouridine at position 1915 (m3Psi1915) in 23S rRNA. The sequence is that of Ribosomal RNA large subunit methyltransferase H from Bacillus cereus (strain ATCC 10987 / NRS 248).